The following is a 629-amino-acid chain: tRNA uridine 5-carboxymethylaminomethyl modification enzyme MnmG (629 aa).

13 to 18 (GGGHAG) is an FAD binding site. Residue 273-287 (GPRYCPSIEDKIHRF) participates in NAD(+) binding.

The protein belongs to the MnmG family. As to quaternary structure, homodimer. Heterotetramer of two MnmE and two MnmG subunits. FAD is required as a cofactor.

The protein resides in the cytoplasm. NAD-binding protein involved in the addition of a carboxymethylaminomethyl (cmnm) group at the wobble position (U34) of certain tRNAs, forming tRNA-cmnm(5)s(2)U34. This is tRNA uridine 5-carboxymethylaminomethyl modification enzyme MnmG from Shewanella denitrificans (strain OS217 / ATCC BAA-1090 / DSM 15013).